A 261-amino-acid polypeptide reads, in one-letter code: Hydroxyethylthiazole kinase (261 aa).

M38 contributes to the substrate binding site. ATP contacts are provided by R114 and T159. G186 is a substrate binding site.

Belongs to the Thz kinase family. The cofactor is Mg(2+).

It carries out the reaction 5-(2-hydroxyethyl)-4-methylthiazole + ATP = 4-methyl-5-(2-phosphooxyethyl)-thiazole + ADP + H(+). It functions in the pathway cofactor biosynthesis; thiamine diphosphate biosynthesis; 4-methyl-5-(2-phosphoethyl)-thiazole from 5-(2-hydroxyethyl)-4-methylthiazole: step 1/1. In terms of biological role, catalyzes the phosphorylation of the hydroxyl group of 4-methyl-5-beta-hydroxyethylthiazole (THZ). This is Hydroxyethylthiazole kinase from Halalkalibacterium halodurans (strain ATCC BAA-125 / DSM 18197 / FERM 7344 / JCM 9153 / C-125) (Bacillus halodurans).